A 211-amino-acid chain; its full sequence is Imidazole glycerol phosphate synthase subunit HisH (211 aa).

Residues 3–211 (VIAVVDYEMG…VAQVREKIPA (209 aa)) enclose the Glutamine amidotransferase type-1 domain. The active-site Nucleophile is the cysteine 81. Catalysis depends on residues histidine 186 and glutamate 188.

In terms of assembly, heterodimer of HisH and HisF.

It is found in the cytoplasm. The enzyme catalyses 5-[(5-phospho-1-deoxy-D-ribulos-1-ylimino)methylamino]-1-(5-phospho-beta-D-ribosyl)imidazole-4-carboxamide + L-glutamine = D-erythro-1-(imidazol-4-yl)glycerol 3-phosphate + 5-amino-1-(5-phospho-beta-D-ribosyl)imidazole-4-carboxamide + L-glutamate + H(+). The catalysed reaction is L-glutamine + H2O = L-glutamate + NH4(+). It participates in amino-acid biosynthesis; L-histidine biosynthesis; L-histidine from 5-phospho-alpha-D-ribose 1-diphosphate: step 5/9. IGPS catalyzes the conversion of PRFAR and glutamine to IGP, AICAR and glutamate. The HisH subunit catalyzes the hydrolysis of glutamine to glutamate and ammonia as part of the synthesis of IGP and AICAR. The resulting ammonia molecule is channeled to the active site of HisF. This chain is Imidazole glycerol phosphate synthase subunit HisH, found in Nostoc punctiforme (strain ATCC 29133 / PCC 73102).